The chain runs to 321 residues: Type 3 secretion system translocon protein SctB (321 aa).

Residues 99 to 119 (AALIGGAISSVLGILGSFAAI) traverse the membrane as a helical segment.

The protein belongs to the SctB/EspB family. The core secretion machinery of the T3SS is composed of approximately 20 different proteins, including cytoplasmic components, a base, an export apparatus and a needle. This subunit is involved in the formation of a pore, called the translocon, in host membrane.

Its subcellular location is the secreted. It localises to the cell surface. The protein resides in the host membrane. Functionally, component of the type III secretion system (T3SS), also called injectisome, which is used to inject bacterial effector proteins into eukaryotic host cells. EspD and EspB are inserted into the host membrane where they form a pore and allow the translocation of effector proteins into the cytosol of target cells. Necessary for intimate attachment to epithelial cells. In Escherichia coli O127:H6 (strain E2348/69 / EPEC), this protein is Type 3 secretion system translocon protein SctB.